A 566-amino-acid chain; its full sequence is Intracellular exo-alpha-(1-&gt;5)-L-arabinofuranosidase (566 aa).

Over residues 1–12 (MTTHNSQYSAET) the composition is skewed to polar residues. The segment at 1 to 39 (MTTHNSQYSAETTHPDKQESSPAPTAAGTTASNVSTTGN) is disordered. The segment covering 20–32 (SSPAPTAAGTTAS) has biased composition (low complexity). Positions 69, 114, and 214 each coordinate alpha-L-arabinofuranose. The Proton donor/acceptor role is filled by Glu-215. Positions 286, 340, and 409 each coordinate alpha-L-arabinofuranose. The active-site Nucleophile is Glu-340.

This sequence belongs to the glycosyl hydrolase 51 family. Homohexamer; trimer of dimers.

It is found in the cytoplasm. It carries out the reaction Hydrolysis of terminal non-reducing alpha-L-arabinofuranoside residues in alpha-L-arabinosides.. It functions in the pathway glycan metabolism; L-arabinan degradation. With respect to regulation, completely inhibited by Hg(2+) and Cu(2+) ions, whereas 1 mM Zn(2+) inhibited activity by 51%. Involved in the degradation of arabinan and is a key enzyme in the complete degradation of the plant cell wall. Catalyzes the cleavage of terminal alpha-(1-&gt;5)-arabinofuranosyl bonds in different hemicellulosic homopolysaccharides (branched and debranched arabinans). It is active with sugar beet arabinan and wheat arabinoxylan. It also exhibited activity against alpha-(1-&gt;5)-linked arabinobiose, arabinotriose, arabinotetraose, and arabinopentaose. In Bifidobacterium longum, this protein is Intracellular exo-alpha-(1-&gt;5)-L-arabinofuranosidase (abfB).